The chain runs to 403 residues: Ribosomal RNA large subunit methyltransferase I (403 aa).

The region spanning 9–88 is the PUA domain; that stretch reads YPRLILSKGR…ESIDIAFFTR (80 aa).

Belongs to the methyltransferase superfamily. RlmI family.

It is found in the cytoplasm. It catalyses the reaction cytidine(1962) in 23S rRNA + S-adenosyl-L-methionine = 5-methylcytidine(1962) in 23S rRNA + S-adenosyl-L-homocysteine + H(+). In terms of biological role, specifically methylates the cytosine at position 1962 (m5C1962) of 23S rRNA. This Salmonella paratyphi C (strain RKS4594) protein is Ribosomal RNA large subunit methyltransferase I.